The primary structure comprises 387 residues: Protein FAM153B (387 aa).

2 disordered regions span residues Ser-233 to Leu-256 and Thr-327 to Arg-374. Residues Ser-336–Glu-345 are compositionally biased toward low complexity. The span at Ala-347 to Thr-359 shows a compositional bias: basic and acidic residues. Basic residues predominate over residues Arg-360–Arg-374.

It belongs to the FAM153 family.

The protein is Protein FAM153B (FAM153B) of Homo sapiens (Human).